We begin with the raw amino-acid sequence, 665 residues long: Macrolide export ATP-binding/permease protein MacB (665 aa).

One can recognise an ABC transporter domain in the interval 17–255; sequence MQVKGLIREF…VAQFSSIIDK (239 aa). 53–60 is a binding site for ATP; sequence GQSGSGKS. 4 helical membrane-spanning segments follow: residues 287–307, 544–564, 588–608, and 630–650; these read LLTMLGIIIGIASVVSVVGLG, IAIISLIVGGIGVMNIMLVSV, FLIEAVLVCILGGLLGIGMAF, and SIIAAFVCSTLIGVVFGFLPA.

The protein belongs to the ABC transporter superfamily. Macrolide exporter (TC 3.A.1.122) family. Homodimer. Part of the tripartite efflux system MacAB-TolC, which is composed of an inner membrane transporter, MacB, a periplasmic membrane fusion protein, MacA, and an outer membrane component, TolC. The complex forms a large protein conduit and can translocate molecules across both the inner and outer membranes. Interacts with MacA.

Its subcellular location is the cell inner membrane. In terms of biological role, part of the tripartite efflux system MacAB-TolC. MacB is a non-canonical ABC transporter that contains transmembrane domains (TMD), which form a pore in the inner membrane, and an ATP-binding domain (NBD), which is responsible for energy generation. Confers resistance against macrolides. The chain is Macrolide export ATP-binding/permease protein MacB from Psychrobacter arcticus (strain DSM 17307 / VKM B-2377 / 273-4).